A 626-amino-acid chain; its full sequence is METKQFKAESKRLLDLMINSIYTHKEIFLRELISNSSDAMDKIYYKTLTEDSLKFERDDYYIKVVFDKENRVLKIADTGIGMTKEELENNLGVIAKSGSLQFKKENEVKEGYDIIGQFGVGFYSAFLVSDDVTVISKAFGSNEAYKWNSKGAEGYTIEPCEKEAYGTEIILKIKDNTEEENYDEFLDEYTLKSIIKKYSDFIRYPIKMDLTKTKPKEDNKEEFEEYKEEETINSMVPIWRKNKNELKAEDYENFYAEKHYGFDKPIKYIHTSVDGVVSYNAILFIPETTPYDFYTKEYEKGLELYSSGVLIMNKCGDLLPDYFGFVKGIVDSEDLSLNISREILQHDRQLKLIAKNIKTKIKNELESLLKKERDKYEKFYESFGRQLKYGVYSDFGSNKDILQDLLMFYSSKEKKMVTLAEYVSRMPEDQKYIYYAVGESNERIEKLPQIEGVLDKGYEVLYFTDDIDEFAIKMLMNYKEKEFKSVSSGDLGIEGEEKENTSSSDDKENKELFESMKDILSGKVKDVRASKRLKNHPVCLANEGELSIEMEKVLNAMPNNQNIKADKVLEININHDVFKPLKEAYEGDKEKLKLYTDLLYNQALLIEGLTINDPVEFTNNICKIMK.

Residues 1–341 form an a; substrate-binding region; sequence METKQFKAES…SEDLSLNISR (341 aa). Residues 342–552 are b; sequence EILQHDRQLK…EGELSIEMEK (211 aa). Residues 490–509 are disordered; sequence DLGIEGEEKENTSSSDDKEN. A compositionally biased stretch (basic and acidic residues) spans 498-509; that stretch reads KENTSSSDDKEN. The c stretch occupies residues 553-626; sequence VLNAMPNNQN…FTNNICKIMK (74 aa).

Belongs to the heat shock protein 90 family. As to quaternary structure, homodimer.

It localises to the cytoplasm. Its function is as follows. Molecular chaperone. Has ATPase activity. The sequence is that of Chaperone protein HtpG from Clostridium botulinum (strain Loch Maree / Type A3).